The chain runs to 215 residues: 3-demethoxyubiquinol 3-hydroxylase (215 aa).

Fe cation is bound by residues E64, E94, H97, E146, E178, and H181.

This sequence belongs to the COQ7 family. The cofactor is Fe cation.

It is found in the cell membrane. It catalyses the reaction a 5-methoxy-2-methyl-3-(all-trans-polyprenyl)benzene-1,4-diol + AH2 + O2 = a 3-demethylubiquinol + A + H2O. It functions in the pathway cofactor biosynthesis; ubiquinone biosynthesis. In terms of biological role, catalyzes the hydroxylation of 2-nonaprenyl-3-methyl-6-methoxy-1,4-benzoquinol during ubiquinone biosynthesis. The protein is 3-demethoxyubiquinol 3-hydroxylase of Azotobacter vinelandii (strain DJ / ATCC BAA-1303).